The following is an 842-amino-acid chain: Envelope glycoprotein H (842 aa).

An N-terminal signal peptide occupies residues 1-20 (MRRPLCAALLAAAVLALAAG). At 21–802 (APAAARGGAG…AGHEAPTFSP (782 aa)) the chain is on the virion surface side. N77 and N112 each carry an N-linked (GlcNAc...) asparagine; by host glycan. The interaction with gL stretch occupies residues 240-303 (ERAAARLAVG…AAGPQRRAYV (64 aa)). N-linked (GlcNAc...) asparagine; by host glycosylation is found at N617, N666, N760, and N783. Residues 803 to 823 (AYVWASVGGALVAGTTIYAIA) form a helical membrane-spanning segment. Residues 824–842 (KMLCSSVPLARGYSSVPVF) lie on the Intravirion side of the membrane.

The protein belongs to the herpesviridae glycoprotein H family. Interacts with glycoprotein L (gL); this interaction is necessary for the correct processing and cell surface expression of gH. The heterodimer gH/gL seems to interact with gB trimers during fusion. In terms of processing, N-glycosylated, O-glycosylated, and sialylated.

The protein localises to the virion membrane. It is found in the host cell membrane. Its subcellular location is the host endosome membrane. The heterodimer glycoprotein H-glycoprotein L is required for the fusion of viral and plasma membranes leading to virus entry into the host cell. Following initial binding to host receptor, membrane fusion is mediated by the fusion machinery composed of gB and the heterodimer gH/gL. May also be involved in the fusion between the virion envelope and the outer nuclear membrane during virion morphogenesis. This is Envelope glycoprotein H from Bos taurus (Bovine).